The primary structure comprises 518 residues: 12S seed storage globulin 1 (518 aa).

An N-terminal signal peptide occupies residues Met1–Ala24. 2 disulfides stabilise this stretch: Cys45/Cys78 and Cys121/Cys324. Residues Leu50 to Gln240 enclose the Cupin type-1 1 domain. A compositionally biased stretch (low complexity) spans Gln281–Ser295. The tract at residues Gln281 to Ser311 is disordered. The span at Pro296–Ser311 shows a compositional bias: polar residues. Positions Gln330–Gln479 constitute a Cupin type-1 2 domain. The disordered stretch occupies residues Phe496–Glu518.

Belongs to the 11S seed storage protein (globulins) family. Hexamer; each subunit is composed of an acidic and a basic chain derived from a single precursor and linked by a disulfide bond.

Its function is as follows. This is a seed storage protein. The chain is 12S seed storage globulin 1 from Avena sativa (Oat).